Reading from the N-terminus, the 304-residue chain is UDP-3-O-acyl-N-acetylglucosamine deacetylase (304 aa).

Zn(2+)-binding residues include histidine 78, histidine 237, and aspartate 241. Catalysis depends on histidine 264, which acts as the Proton donor.

Belongs to the LpxC family. It depends on Zn(2+) as a cofactor.

It catalyses the reaction a UDP-3-O-[(3R)-3-hydroxyacyl]-N-acetyl-alpha-D-glucosamine + H2O = a UDP-3-O-[(3R)-3-hydroxyacyl]-alpha-D-glucosamine + acetate. It participates in glycolipid biosynthesis; lipid IV(A) biosynthesis; lipid IV(A) from (3R)-3-hydroxytetradecanoyl-[acyl-carrier-protein] and UDP-N-acetyl-alpha-D-glucosamine: step 2/6. Catalyzes the hydrolysis of UDP-3-O-myristoyl-N-acetylglucosamine to form UDP-3-O-myristoylglucosamine and acetate, the committed step in lipid A biosynthesis. The polypeptide is UDP-3-O-acyl-N-acetylglucosamine deacetylase (Nitrosococcus oceani (strain ATCC 19707 / BCRC 17464 / JCM 30415 / NCIMB 11848 / C-107)).